The chain runs to 558 residues: Energy-dependent translational throttle protein EttA (558 aa).

ABC transporter domains are found at residues 6–256 and 322–552; these read YTMK…AVQG and VEVD…RVTH. Residue 38-45 participates in ATP binding; it reads GPNGAGKS. The segment at 94–136 is arm; sequence GDIKIKLDRFNEVAELMATDYTDELMEEMGRLQEELDHADAWD. Residues 239 to 320 form a ptIM region; the sequence is GNYSTYLEKK…IPVGPRLGNV (82 aa). 354–361 is a binding site for ATP; the sequence is GPNGVGKT.

It belongs to the ABC transporter superfamily. ABCF family. Translational throttle EttA subfamily. Monomer. Probably contacts ribosomal proteins L1, L5, L33 and S7, the 16S and 23S rRNA and the P-site containing tRNA(fMet).

Its subcellular location is the cytoplasm. The catalysed reaction is ATP + H2O = ADP + phosphate + H(+). Functionally, a translation factor that gates the progression of the 70S ribosomal initiation complex (IC, containing tRNA(fMet) in the P-site) into the translation elongation cycle by using a mechanism sensitive to the ATP/ADP ratio. Binds to the 70S ribosome E-site where it modulates the state of the translating ribosome during subunit translocation. ATP hydrolysis probably frees it from the ribosome, which can enter the elongation phase. The sequence is that of Energy-dependent translational throttle protein EttA from Mycobacterium tuberculosis (strain CDC 1551 / Oshkosh).